A 304-amino-acid polypeptide reads, in one-letter code: Tetrahydromethanopterin S-methyltransferase subunit E (304 aa).

6 helical membrane-spanning segments follow: residues 3 to 23 (PLIG…AGAS), 86 to 106 (PLFA…TFAV), 131 to 151 (HTPV…VVSY), 152 to 172 (LMTV…IWGI), 233 to 253 (PVTG…TTVF), and 263 to 283 (WISV…NWKI).

This sequence belongs to the MtrE family. The complex is composed of 8 subunits; MtrA, MtrB, MtrC, MtrD, MtrE, MtrF, MtrG and MtrH.

The protein resides in the cell membrane. The enzyme catalyses 5-methyl-5,6,7,8-tetrahydromethanopterin + coenzyme M + 2 Na(+)(in) = 5,6,7,8-tetrahydromethanopterin + methyl-coenzyme M + 2 Na(+)(out). It functions in the pathway one-carbon metabolism; methanogenesis from CO(2); methyl-coenzyme M from 5,10-methylene-5,6,7,8-tetrahydromethanopterin: step 2/2. Part of a complex that catalyzes the formation of methyl-coenzyme M and tetrahydromethanopterin from coenzyme M and methyl-tetrahydromethanopterin. This is an energy-conserving, sodium-ion translocating step. The chain is Tetrahydromethanopterin S-methyltransferase subunit E from Methanosarcina acetivorans (strain ATCC 35395 / DSM 2834 / JCM 12185 / C2A).